The following is a 1131-amino-acid chain: DNA polymerase II large subunit (1131 aa).

Belongs to the archaeal DNA polymerase II family. As to quaternary structure, heterodimer of a large subunit and a small subunit.

It catalyses the reaction DNA(n) + a 2'-deoxyribonucleoside 5'-triphosphate = DNA(n+1) + diphosphate. The enzyme catalyses Exonucleolytic cleavage in the 3'- to 5'-direction to yield nucleoside 5'-phosphates.. Its function is as follows. Possesses two activities: a DNA synthesis (polymerase) and an exonucleolytic activity that degrades single-stranded DNA in the 3'- to 5'-direction. Has a template-primer preference which is characteristic of a replicative DNA polymerase. This Methanococcus vannielii (strain ATCC 35089 / DSM 1224 / JCM 13029 / OCM 148 / SB) protein is DNA polymerase II large subunit.